Reading from the N-terminus, the 263-residue chain is Microtubule-associated protein RP/EB family member 1 (263 aa).

Residues 14–116 (NLSRHDMLAW…FVQWFKKFFD (103 aa)) enclose the Calponin-homology (CH) domain. The interval 150 to 182 (KPLGTGSAGPQRPIVAQRTPATPKGGTGMVKKA) is disordered. The EB1 C-terminal domain maps to 180–250 (KKAAGDDESA…LYATDEGFVI (71 aa)).

This sequence belongs to the MAPRE family.

It is found in the cytoplasm. The protein resides in the cytoskeleton. The protein localises to the microtubule organizing center. Its subcellular location is the centrosome. It localises to the golgi apparatus. It is found in the spindle. The protein resides in the spindle pole. In terms of biological role, plus-end tracking protein (+TIP) that binds to the plus-end of microtubules and regulates the dynamics of the microtubule cytoskeleton. Promotes cytoplasmic microtubule nucleation and elongation. Involved in mitotic spindle positioning by stabilizing microtubules and promoting dynamic connection between astral microtubules and the cortex during mitotic chromosome segregation. This Coturnix japonica (Japanese quail) protein is Microtubule-associated protein RP/EB family member 1 (MAPRE1).